The primary structure comprises 671 residues: DNA ligase (671 aa).

Residues 32-36 (DAEYD), 81-82 (SL), and Glu-113 contribute to the NAD(+) site. The N6-AMP-lysine intermediate role is filled by Lys-115. 4 residues coordinate NAD(+): Arg-136, Glu-173, Lys-290, and Lys-314. The Zn(2+) site is built by Cys-408, Cys-411, Cys-426, and Cys-432. Residues 593–671 (EIDSPFAGKT…EAEMLRLLGS (79 aa)) enclose the BRCT domain.

This sequence belongs to the NAD-dependent DNA ligase family. LigA subfamily. Mg(2+) serves as cofactor. The cofactor is Mn(2+).

The catalysed reaction is NAD(+) + (deoxyribonucleotide)n-3'-hydroxyl + 5'-phospho-(deoxyribonucleotide)m = (deoxyribonucleotide)n+m + AMP + beta-nicotinamide D-nucleotide.. In terms of biological role, DNA ligase that catalyzes the formation of phosphodiester linkages between 5'-phosphoryl and 3'-hydroxyl groups in double-stranded DNA using NAD as a coenzyme and as the energy source for the reaction. It is essential for DNA replication and repair of damaged DNA. This Escherichia coli (strain ATCC 8739 / DSM 1576 / NBRC 3972 / NCIMB 8545 / WDCM 00012 / Crooks) protein is DNA ligase.